A 278-amino-acid chain; its full sequence is S-formylglutathione hydrolase YeiG (278 aa).

Active-site charge relay system residues include Ser-145, Asp-223, and His-256.

The protein belongs to the esterase D family.

It carries out the reaction S-formylglutathione + H2O = formate + glutathione + H(+). In terms of biological role, serine hydrolase involved in the detoxification of formaldehyde. Hydrolyzes S-formylglutathione to glutathione and formate. The sequence is that of S-formylglutathione hydrolase YeiG (yeiG) from Shigella flexneri serotype 5b (strain 8401).